A 154-amino-acid chain; its full sequence is Protein phosphatase 1 regulatory subunit 27 (154 aa).

2 ANK repeats span residues 63-92 and 96-125; these read SGLA…DIHQ and TGWT…DRDA.

In terms of assembly, interacts with DYSF and PPP1CA.

Functionally, inhibits phosphatase activity of protein phosphatase 1 (PP1) complexes. This Mus musculus (Mouse) protein is Protein phosphatase 1 regulatory subunit 27 (Ppp1r27).